The primary structure comprises 425 residues: Kynureninase (425 aa).

Pyridoxal 5'-phosphate is bound by residues Leu-105, Thr-106, 133-136, Asp-218, His-221, and Tyr-243; that span reads FPSD. N6-(pyridoxal phosphate)lysine is present on Lys-244. Pyridoxal 5'-phosphate contacts are provided by Trp-274 and Asn-302.

The protein belongs to the kynureninase family. As to quaternary structure, homodimer. The cofactor is pyridoxal 5'-phosphate.

It catalyses the reaction L-kynurenine + H2O = anthranilate + L-alanine + H(+). It carries out the reaction 3-hydroxy-L-kynurenine + H2O = 3-hydroxyanthranilate + L-alanine + H(+). It participates in amino-acid degradation; L-kynurenine degradation; L-alanine and anthranilate from L-kynurenine: step 1/1. Its pathway is cofactor biosynthesis; NAD(+) biosynthesis; quinolinate from L-kynurenine: step 2/3. Its function is as follows. Catalyzes the cleavage of L-kynurenine (L-Kyn) and L-3-hydroxykynurenine (L-3OHKyn) into anthranilic acid (AA) and 3-hydroxyanthranilic acid (3-OHAA), respectively. In Christiangramia forsetii (strain DSM 17595 / CGMCC 1.15422 / KT0803) (Gramella forsetii), this protein is Kynureninase.